The primary structure comprises 446 residues: Glutamyl-tRNA reductase (446 aa).

Substrate is bound by residues 49-52 (TCNR), Ser-108, 113-115 (ETQ), and Gln-119. Residue Cys-50 is the Nucleophile of the active site. 188-193 (GAGKMS) serves as a coordination point for NADP(+).

Belongs to the glutamyl-tRNA reductase family. Homodimer.

The enzyme catalyses (S)-4-amino-5-oxopentanoate + tRNA(Glu) + NADP(+) = L-glutamyl-tRNA(Glu) + NADPH + H(+). Its pathway is porphyrin-containing compound metabolism; protoporphyrin-IX biosynthesis; 5-aminolevulinate from L-glutamyl-tRNA(Glu): step 1/2. Functionally, catalyzes the NADPH-dependent reduction of glutamyl-tRNA(Glu) to glutamate 1-semialdehyde (GSA). The polypeptide is Glutamyl-tRNA reductase (Desulforudis audaxviator (strain MP104C)).